The following is a 203-amino-acid chain: Protein GrpE 2 (203 aa).

The segment covering 1–12 (MPTRPQEPDRAA) has biased composition (basic and acidic residues). The segment at 1-64 (MPTRPQEPDR…APAEDEYTTA (64 aa)) is disordered. Residues 45 to 56 (GEPGPDAAGPAP) are compositionally biased toward low complexity.

The protein belongs to the GrpE family. As to quaternary structure, homodimer.

It localises to the cytoplasm. In terms of biological role, participates actively in the response to hyperosmotic and heat shock by preventing the aggregation of stress-denatured proteins, in association with DnaK and GrpE. It is the nucleotide exchange factor for DnaK and may function as a thermosensor. Unfolded proteins bind initially to DnaJ; upon interaction with the DnaJ-bound protein, DnaK hydrolyzes its bound ATP, resulting in the formation of a stable complex. GrpE releases ADP from DnaK; ATP binding to DnaK triggers the release of the substrate protein, thus completing the reaction cycle. Several rounds of ATP-dependent interactions between DnaJ, DnaK and GrpE are required for fully efficient folding. The polypeptide is Protein GrpE 2 (Streptomyces avermitilis (strain ATCC 31267 / DSM 46492 / JCM 5070 / NBRC 14893 / NCIMB 12804 / NRRL 8165 / MA-4680)).